Consider the following 173-residue polypeptide: Histone deacetylase complex subunit SAP30 homolog (173 aa).

An Atypical zinc finger spans residues 21 to 69 (CCLLDDGDRCRNQAGNASYSKRIQKTVTQRRLKLSIDTAARHIYICDFH).

The protein belongs to the SAP30 family. As to quaternary structure, component of the class 1 Sin3-histone deacetylase complex (HDAC).

The protein resides in the nucleus. In terms of biological role, required for the function of the class 1 Sin3-histone deacetylase complex (HDAC). The protein is Histone deacetylase complex subunit SAP30 homolog of Aedes aegypti (Yellowfever mosquito).